We begin with the raw amino-acid sequence, 421 residues long: UDP-N-acetylglucosamine 1-carboxyvinyltransferase 2 (421 aa).

22–23 (KN) lines the phosphoenolpyruvate pocket. A UDP-N-acetyl-alpha-D-glucosamine-binding site is contributed by R95. C119 functions as the Proton donor in the catalytic mechanism. Position 119 is a 2-(S-cysteinyl)pyruvic acid O-phosphothioketal (C119). Residues 124-128 (RPIEQ), D308, and V330 contribute to the UDP-N-acetyl-alpha-D-glucosamine site.

It belongs to the EPSP synthase family. MurA subfamily.

The protein resides in the cytoplasm. The enzyme catalyses phosphoenolpyruvate + UDP-N-acetyl-alpha-D-glucosamine = UDP-N-acetyl-3-O-(1-carboxyvinyl)-alpha-D-glucosamine + phosphate. It participates in cell wall biogenesis; peptidoglycan biosynthesis. Functionally, cell wall formation. Adds enolpyruvyl to UDP-N-acetylglucosamine. The polypeptide is UDP-N-acetylglucosamine 1-carboxyvinyltransferase 2 (Staphylococcus haemolyticus (strain JCSC1435)).